A 199-amino-acid polypeptide reads, in one-letter code: Translation initiation factor IF-3 (199 aa).

This sequence belongs to the IF-3 family. In terms of assembly, monomer.

The protein resides in the cytoplasm. In terms of biological role, IF-3 binds to the 30S ribosomal subunit and shifts the equilibrium between 70S ribosomes and their 50S and 30S subunits in favor of the free subunits, thus enhancing the availability of 30S subunits on which protein synthesis initiation begins. The polypeptide is Translation initiation factor IF-3 (Gloeobacter violaceus (strain ATCC 29082 / PCC 7421)).